Reading from the N-terminus, the 215-residue chain is Protein-methionine-sulfoxide reductase heme-binding subunit MsrQ (215 aa).

The next 6 membrane-spanning stretches (helical) occupy residues 17–37, 50–70, 85–105, 121–141, 152–172, and 177–197; these read AAIWSLYVIGLCPGLWYFYLA, FEHLLGIWALRFLCLGLLVTP, ALGLIAFYYVLAHFTVYLVLD, PYIMLGMAGLIILIPLALTSN, WNTLHKLVYLVLIVGVLHFVL, and ITLEPVFYISTMVVLLGYRLV.

This sequence belongs to the MsrQ family. In terms of assembly, heterodimer of a catalytic subunit (MsrP) and a heme-binding subunit (MsrQ). The cofactor is FMN. Heme b serves as cofactor.

It is found in the cell inner membrane. Its function is as follows. Part of the MsrPQ system that repairs oxidized periplasmic proteins containing methionine sulfoxide residues (Met-O), using respiratory chain electrons. Thus protects these proteins from oxidative-stress damage caused by reactive species of oxygen and chlorine generated by the host defense mechanisms. MsrPQ is essential for the maintenance of envelope integrity under bleach stress, rescuing a wide series of structurally unrelated periplasmic proteins from methionine oxidation. MsrQ provides electrons for reduction to the reductase catalytic subunit MsrP, using the quinone pool of the respiratory chain. The chain is Protein-methionine-sulfoxide reductase heme-binding subunit MsrQ from Agrobacterium fabrum (strain C58 / ATCC 33970) (Agrobacterium tumefaciens (strain C58)).